The following is a 1150-amino-acid chain: PAN2-PAN3 deadenylation complex catalytic subunit pan2 (1150 aa).

WD repeat units lie at residues 96–139 (AHEE…DKLH) and 270–309 (ANVS…HFNE). Positions 310–446 (MSKEAEFGDV…GAKINGETDD (137 aa)) are linker. Positions 447–816 (DPLLKYSNVE…IPCVLAYQVQ (370 aa)) constitute a USP domain. The Exonuclease domain maps to 865-1043 (VALDTEFVDL…IEDARMALRL (179 aa)). 4 residues coordinate a divalent metal cation: D868, E870, D977, and D1036. The interval 1074–1150 (PPPRNGVPTV…GDFFSGSPLK (77 aa)) is disordered. The span at 1091 to 1106 (VTMQNNSGRNTPSTSD) shows a compositional bias: polar residues. Low complexity predominate over residues 1108–1120 (AGAAASAPATPRQ).

Belongs to the peptidase C19 family. PAN2 subfamily. As to quaternary structure, forms a heterotrimer with an asymmetric homodimer of the regulatory subunit pan3 to form the poly(A)-nuclease (PAN) deadenylation complex. The cofactor is a divalent metal cation.

Its subcellular location is the cytoplasm. It carries out the reaction Exonucleolytic cleavage of poly(A) to 5'-AMP.. Its activity is regulated as follows. Positively regulated by the regulatory subunit pan3. Catalytic subunit of the poly(A)-nuclease (PAN) deadenylation complex, one of two cytoplasmic mRNA deadenylases involved in mRNA turnover. PAN specifically shortens poly(A) tails of RNA and the activity is stimulated by poly(A)-binding protein pab1. PAN deadenylation is followed by rapid degradation of the shortened mRNA tails by the CCR4-NOT complex. Deadenylated mRNAs are then degraded by two alternative mechanisms, namely exosome-mediated 3'-5' exonucleolytic degradation, or deadenylation-dependent mRNA decaping and subsequent 5'-3' exonucleolytic degradation by xrn1. May also be involved in post-transcriptional maturation of mRNA poly(A) tails. The protein is PAN2-PAN3 deadenylation complex catalytic subunit pan2 of Aspergillus niger (strain ATCC MYA-4892 / CBS 513.88 / FGSC A1513).